The following is a 300-amino-acid chain: Putative zinc finger protein 705EP (300 aa).

The 72-residue stretch at 7-78 (VTFEDVAIDF…GREFLQDQNP (72 aa)) folds into the KRAB domain. The C2H2-type 1; degenerate zinc finger occupies 172 to 194 (YQCNLCEKAYTNCFHLRRPKMTH). 2 C2H2-type zinc fingers span residues 200–222 (YTCH…EKTH) and 228–250 (YKCH…ERTH). The C2H2-type 4; degenerate zinc-finger motif lies at 256–278 (YECDNSGKAFSQSSGFRGNKIIH).

This sequence belongs to the krueppel C2H2-type zinc-finger protein family.

The protein resides in the nucleus. May be involved in transcriptional regulation. The polypeptide is Putative zinc finger protein 705EP (Homo sapiens (Human)).